We begin with the raw amino-acid sequence, 208 residues long: FMN-dependent NADH:quinone oxidoreductase (208 aa).

FMN is bound by residues 17–19 (SNS), 99–102 (MWNL), and 143–146 (SRGG).

Belongs to the azoreductase type 1 family. Homodimer. Requires FMN as cofactor.

The enzyme catalyses 2 a quinone + NADH + H(+) = 2 a 1,4-benzosemiquinone + NAD(+). It carries out the reaction N,N-dimethyl-1,4-phenylenediamine + anthranilate + 2 NAD(+) = 2-(4-dimethylaminophenyl)diazenylbenzoate + 2 NADH + 2 H(+). Functionally, quinone reductase that provides resistance to thiol-specific stress caused by electrophilic quinones. In terms of biological role, also exhibits azoreductase activity. Catalyzes the reductive cleavage of the azo bond in aromatic azo compounds to the corresponding amines. This Staphylococcus aureus (strain MSSA476) protein is FMN-dependent NADH:quinone oxidoreductase.